A 382-amino-acid chain; its full sequence is Acetylornithine deacetylase (382 aa).

Residue His-79 coordinates Zn(2+). The active site involves Asp-81. Asp-111 provides a ligand contact to Zn(2+). Glu-143 is a catalytic residue. Residues Glu-144, Glu-168, and His-354 each contribute to the Zn(2+) site.

The protein belongs to the peptidase M20A family. ArgE subfamily. As to quaternary structure, homodimer. Requires Zn(2+) as cofactor. Co(2+) serves as cofactor. Glutathione is required as a cofactor.

It is found in the cytoplasm. The enzyme catalyses N(2)-acetyl-L-ornithine + H2O = L-ornithine + acetate. Its pathway is amino-acid biosynthesis; L-arginine biosynthesis; L-ornithine from N(2)-acetyl-L-ornithine (linear): step 1/1. Its function is as follows. Catalyzes the hydrolysis of the amide bond of N(2)-acetylated L-amino acids. Cleaves the acetyl group from N-acetyl-L-ornithine to form L-ornithine, an intermediate in L-arginine biosynthesis pathway, and a branchpoint in the synthesis of polyamines. This is Acetylornithine deacetylase from Pasteurella multocida (strain Pm70).